Consider the following 474-residue polypeptide: Coiled-coil domain-containing protein 6 (474 aa).

Positions 1-10 (MADSASESDT) are enriched in acidic residues. The disordered stretch occupies residues 1-47 (MADSASESDTDGAGGNSSSSAAMQSSCSSTSGGGGGGGGGGGGGKSG). At A2 the chain carries N-acetylalanine. A compositionally biased stretch (low complexity) spans 16-30 (NSSSSAAMQSSCSST). Gly residues predominate over residues 31–47 (SGGGGGGGGGGGGGKSG). S52 is subject to Phosphoserine. The stretch at 53-237 (PFRLEELTNR…KRILQEKLDQ (185 aa)) forms a coiled coil. Tandem repeats lie at residues 106-134 (EQEE…AVNY), 135-163 (EKEE…EQHL), and 164-192 (EQEQ…QLTL). The interval 106–235 (EQEEEFISNT…AEKRILQEKL (130 aa)) is 5 X 29 AA tandem repeats. Residues 193–206 (EQLRREKIDLENTL) form a 4; approximate repeat. Repeat unit 5 spans residues 207-235 (EQEQEALVNRLWKRMDKLEAEKRILQEKL). A phosphoserine mark is found at S240, S244, S249, S254, S284, and S323. The stretch at 253 to 332 (DSPENMMRHI…SESESSLEMD (80 aa)) forms a coiled coil. The tract at residues 342 to 369 (AQGLRPRTVSSPIPYTPSPSSSRPISPG) is disordered. T349 carries the phosphothreonine modification. Over residues 351-368 (SSPIPYTPSPSSSRPISP) the composition is skewed to low complexity. Residues S363 and S367 each carry the phosphoserine modification. An Omega-N-methylarginine modification is found at R387. A phosphoserine mark is found at S395 and S413. Residues 397-474 (GLHVQHMGTS…QHSAHPSSQP (78 aa)) form a disordered region. Residues 426 to 451 (PTPPPSPNTQTPVQPPPPPPPPPMQP) show a composition bias toward pro residues. Positions 442 to 451 (PPPPPPPMQP) match the SH3-binding motif. Low complexity predominate over residues 459–474 (SQPTPSQHSAHPSSQP).

As to expression, ubiquitously expressed.

It is found in the cytoplasm. The protein localises to the cytoskeleton. The chain is Coiled-coil domain-containing protein 6 (CCDC6) from Homo sapiens (Human).